A 420-amino-acid polypeptide reads, in one-letter code: RING finger protein 39 (420 aa).

The RING-type zinc-finger motif lies at 88-135 (CPLCGGSFEDPVLLACEHSFCRACLARRWGTPPATGTEASPTACPCCG). Residues 210-420 (DDLPEDYPVV…APLRIVPAES (211 aa)) form the B30.2/SPRY domain.

Expressed in testis.

The protein localises to the cytoplasm. It carries out the reaction S-ubiquitinyl-[E2 ubiquitin-conjugating enzyme]-L-cysteine + [acceptor protein]-L-lysine = [E2 ubiquitin-conjugating enzyme]-L-cysteine + N(6)-ubiquitinyl-[acceptor protein]-L-lysine.. Its pathway is protein modification; protein ubiquitination. Plays an inhibitory role in anti-RNA viral innate immunity by targeting the adapter DDX3X and promoting its 'Lys-48'-linked polyubiquitination. Alternatively, enhances the cGAS-STING pathway activation by promoting 'Lys-63'-linked ubiquitination of STING1, facilitating the STING1-TBK1 complex formation and STING1 activation. Its function is as follows. (Microbial infection) Plays a positive role in human immunodeficiency virus (HIV-1) replication. This is RING finger protein 39 (RNF39) from Homo sapiens (Human).